We begin with the raw amino-acid sequence, 76 residues long: DNA-directed RNA polymerase subunit epsilon (76 aa).

It belongs to the RNA polymerase subunit epsilon family. RNAP is composed of a core of 2 alpha, a beta and a beta' subunit. The core is associated with a delta subunit, and at least one of epsilon or omega. When a sigma factor is associated with the core the holoenzyme is formed, which can initiate transcription.

The catalysed reaction is RNA(n) + a ribonucleoside 5'-triphosphate = RNA(n+1) + diphosphate. In terms of biological role, a non-essential component of RNA polymerase (RNAP). The chain is DNA-directed RNA polymerase subunit epsilon from Lactococcus lactis subsp. lactis (strain IL1403) (Streptococcus lactis).